The following is a 118-amino-acid chain: UPF0145 protein PTO0347 (118 aa).

It belongs to the UPF0145 family.

The protein is UPF0145 protein PTO0347 of Picrophilus torridus (strain ATCC 700027 / DSM 9790 / JCM 10055 / NBRC 100828 / KAW 2/3).